The primary structure comprises 366 residues: Polyprenyl transferase ausN (366 aa).

8 helical membrane passes run 97–117 (VVGI…DLLL), 121–141 (LLLT…NDLI), 164–184 (LPTA…LFLF), 215–235 (LILV…GVEP), 239–259 (ILSS…IDLV), 287–307 (LAYS…LLGG), 308–328 (LRAP…WTFL), and 346–366 (SCLM…AVRV).

This sequence belongs to the UbiA prenyltransferase family. Mg(2+) serves as cofactor.

It is found in the membrane. The catalysed reaction is 3,5-dimethylorsellinate + (2E,6E)-farnesyl diphosphate = (3R)-3-farnesyl-6-hydroxy-2,3,5-trimethyl-4-oxocyclohexa-1,5-diene-1-carboxylate + diphosphate + H(+). Its pathway is secondary metabolite biosynthesis; terpenoid biosynthesis. Polyprenyl transferase; part of the gene cluster that mediates the biosynthesis of calidodehydroaustin, a fungal meroterpenoid. The first step of the pathway is the synthesis of 3,5-dimethylorsellinic acid by the polyketide synthase ausA. 3,5-dimethylorsellinic acid is then prenylated by the polyprenyl transferase ausN. Further epoxidation by the FAD-dependent monooxygenase ausM and cyclization by the probable terpene cyclase ausL lead to the formation of protoaustinoid A. Protoaustinoid A is then oxidized to spiro-lactone preaustinoid A3 by the combined action of the FAD-binding monooxygenases ausB and ausC, and the dioxygenase ausE. Acid-catalyzed keto-rearrangement and ring contraction of the tetraketide portion of preaustinoid A3 by ausJ lead to the formation of preaustinoid A4. The aldo-keto reductase ausK, with the help of ausH, is involved in the next step by transforming preaustinoid A4 into isoaustinone which is in turn hydroxylated by the P450 monooxygenase ausI to form austinolide. The cytochrome P450 monooxygenase ausG modifies austinolide to austinol. Austinol is further acetylated to austin by the O-acetyltransferase ausP, which spontaneously changes to dehydroaustin. The cytochrome P450 monooxygenase ausR then converts dehydroaustin is into 7-dehydrodehydroaustin. The hydroxylation catalyzed by ausR permits the O-acetyltransferase ausQ to add an additional acetyl group to the molecule, leading to the formation of acetoxydehydroaustin. The short chain dehydrogenase ausT catalyzes the reduction of the double bond present between carbon atoms 1 and 2 to convert 7-dehydrodehydroaustin into 1,2-dihydro-7-hydroxydehydroaustin. AusQ catalyzes not only an acetylation reaction but also the addition of the PKS ausV diketide product to 1,2-dihydro-7-hydroxydehydroaustin, forming precalidodehydroaustin. Finally, the iron/alpha-ketoglutarate-dependent dioxygenase converts precalidodehydroaustin into calidodehydroaustin. This is Polyprenyl transferase ausN from Aspergillus calidoustus.